The sequence spans 61 residues: Protein SspF (61 aa).

Belongs to the alpha/beta-type SASP family.

Functionally, may play some important role in either sporulation or the dormant spore. This Bacillus subtilis (strain 168) protein is Protein SspF (sspF).